Reading from the N-terminus, the 396-residue chain is NADH-quinone oxidoreductase subunit D (396 aa).

It belongs to the complex I 49 kDa subunit family. As to quaternary structure, NDH-1 is composed of 14 different subunits. Subunits NuoB, C, D, E, F, and G constitute the peripheral sector of the complex.

The protein resides in the cell inner membrane. It catalyses the reaction a quinone + NADH + 5 H(+)(in) = a quinol + NAD(+) + 4 H(+)(out). Its function is as follows. NDH-1 shuttles electrons from NADH, via FMN and iron-sulfur (Fe-S) centers, to quinones in the respiratory chain. The immediate electron acceptor for the enzyme in this species is believed to be ubiquinone. Couples the redox reaction to proton translocation (for every two electrons transferred, four hydrogen ions are translocated across the cytoplasmic membrane), and thus conserves the redox energy in a proton gradient. This chain is NADH-quinone oxidoreductase subunit D, found in Bartonella quintana (strain Toulouse) (Rochalimaea quintana).